Consider the following 96-residue polypeptide: Large ribosomal subunit protein bL28 (96 aa).

Belongs to the bacterial ribosomal protein bL28 family.

This chain is Large ribosomal subunit protein bL28, found in Orientia tsutsugamushi (strain Boryong) (Rickettsia tsutsugamushi).